We begin with the raw amino-acid sequence, 156 residues long: SsrA-binding protein (156 aa).

Residues 134 to 156 (YDKRETLKRKEQDREMARALRKR) form a disordered region.

This sequence belongs to the SmpB family.

The protein localises to the cytoplasm. In terms of biological role, required for rescue of stalled ribosomes mediated by trans-translation. Binds to transfer-messenger RNA (tmRNA), required for stable association of tmRNA with ribosomes. tmRNA and SmpB together mimic tRNA shape, replacing the anticodon stem-loop with SmpB. tmRNA is encoded by the ssrA gene; the 2 termini fold to resemble tRNA(Ala) and it encodes a 'tag peptide', a short internal open reading frame. During trans-translation Ala-aminoacylated tmRNA acts like a tRNA, entering the A-site of stalled ribosomes, displacing the stalled mRNA. The ribosome then switches to translate the ORF on the tmRNA; the nascent peptide is terminated with the 'tag peptide' encoded by the tmRNA and targeted for degradation. The ribosome is freed to recommence translation, which seems to be the essential function of trans-translation. The chain is SsrA-binding protein from Latilactobacillus sakei subsp. sakei (strain 23K) (Lactobacillus sakei subsp. sakei).